A 391-amino-acid polypeptide reads, in one-letter code: Xylose isomerase (391 aa).

Active-site residues include histidine 54 and aspartate 57. Residues glutamate 181, glutamate 217, histidine 220, aspartate 245, aspartate 255, aspartate 257, and aspartate 287 each coordinate Mg(2+).

It belongs to the xylose isomerase family. In terms of assembly, homotetramer. It depends on Mg(2+) as a cofactor.

It localises to the cytoplasm. It carries out the reaction alpha-D-xylose = alpha-D-xylulofuranose. Functionally, involved in D-xylose catabolism. The sequence is that of Xylose isomerase (xylA) from Streptomyces albus G.